The chain runs to 190 residues: MPTPTKGARLGGSPAHERLMLANLAMSLFQHGKIQTTETKARRLRPLAEQLITKAKRGDLASRRRVLGVVKDKDVVYTLFEQIAPRYANRNGGYTRIVKTGPRKGDAAPMAIIELVEELAVAQPKANKKTAGRKAAQQDKVEALAPAEETPAPTSGDQDAEAPVSVSGDTAAARADSDLAVEENNEQNKA.

Positions 128–190 (KKTAGRKAAQ…VEENNEQNKA (63 aa)) are disordered. A compositionally biased stretch (low complexity) spans 143 to 154 (ALAPAEETPAPT). Over residues 179-190 (LAVEENNEQNKA) the composition is skewed to acidic residues.

It belongs to the bacterial ribosomal protein bL17 family. In terms of assembly, part of the 50S ribosomal subunit. Contacts protein L32.

This is Large ribosomal subunit protein bL17 from Salinispora tropica (strain ATCC BAA-916 / DSM 44818 / JCM 13857 / NBRC 105044 / CNB-440).